A 267-amino-acid chain; its full sequence is 4-hydroxy-tetrahydrodipicolinate reductase (267 aa).

Residues 10–15 (GCGGRM) and E36 contribute to the NAD(+) site. An NADP(+)-binding site is contributed by R37. NAD(+)-binding positions include 99-101 (GTT) and 123-126 (APNF). Residue H156 is the Proton donor/acceptor of the active site. H157 lines the (S)-2,3,4,5-tetrahydrodipicolinate pocket. Catalysis depends on K160, which acts as the Proton donor. 166-167 (GT) provides a ligand contact to (S)-2,3,4,5-tetrahydrodipicolinate.

The protein belongs to the DapB family.

It is found in the cytoplasm. The enzyme catalyses (S)-2,3,4,5-tetrahydrodipicolinate + NAD(+) + H2O = (2S,4S)-4-hydroxy-2,3,4,5-tetrahydrodipicolinate + NADH + H(+). It catalyses the reaction (S)-2,3,4,5-tetrahydrodipicolinate + NADP(+) + H2O = (2S,4S)-4-hydroxy-2,3,4,5-tetrahydrodipicolinate + NADPH + H(+). It participates in amino-acid biosynthesis; L-lysine biosynthesis via DAP pathway; (S)-tetrahydrodipicolinate from L-aspartate: step 4/4. Functionally, catalyzes the conversion of 4-hydroxy-tetrahydrodipicolinate (HTPA) to tetrahydrodipicolinate. This is 4-hydroxy-tetrahydrodipicolinate reductase from Laribacter hongkongensis (strain HLHK9).